Here is a 264-residue protein sequence, read N- to C-terminus: MEAFLGSRSGLWAGGPAPGQFYRIPSTPDSFMDPASALYRGPITRTQNPMVTGTSVLGVKFEGGVVIAADMLGSYGSLARFRNISRIMRVNNSTMLGASGDYADFQYLKQVLGQMVIDEELLGDGHSYSPRAIHSWLTRAMYSRRSKMNPLWNTMVIGGYADGESFLGYVDMLGVAYEAPSLATGYGAYLAQPLLREVLEKQPVLSQTEARDLVERCMRVLYYRDARSYNRFQIATVTEKGVEIEGPLSTETNWDIAHMISGFE.

Met-1 bears the N-acetylmethionine mark. A propeptide spanning residues 1–45 (MEAFLGSRSGLWAGGPAPGQFYRIPSTPDSFMDPASALYRGPITR) is cleaved from the precursor. Ser-26 bears the Phosphoserine mark. Tyr-102 is modified (phosphotyrosine).

This sequence belongs to the peptidase T1B family. In terms of assembly, the 26S proteasome consists of a 20S proteasome core and two 19S regulatory subunits. The 20S proteasome core is a barrel-shaped complex made of 28 subunits that are arranged in four stacked rings. The two outer rings are each formed by seven alpha subunits, and the two inner rings are formed by seven beta subunits. The proteolytic activity is exerted by three beta-subunits PSMB5, PSMB6 and PSMB7. Forms a ternary complex with SMAD1 and OAZ1 before PSMB4 is incorporated into the 20S proteasome. Interacts with PRPF19. (Microbial infection) Interacts with HTLV-1 Tax protein. As to quaternary structure, (Microbial infection) Interacts with HIV-1 Nef and Tat proteins.

It localises to the cytoplasm. The protein localises to the nucleus. Non-catalytic component of the 20S core proteasome complex involved in the proteolytic degradation of most intracellular proteins. This complex plays numerous essential roles within the cell by associating with different regulatory particles. Associated with two 19S regulatory particles, forms the 26S proteasome and thus participates in the ATP-dependent degradation of ubiquitinated proteins. The 26S proteasome plays a key role in the maintenance of protein homeostasis by removing misfolded or damaged proteins that could impair cellular functions, and by removing proteins whose functions are no longer required. Associated with the PA200 or PA28, the 20S proteasome mediates ubiquitin-independent protein degradation. This type of proteolysis is required in several pathways including spermatogenesis (20S-PA200 complex) or generation of a subset of MHC class I-presented antigenic peptides (20S-PA28 complex). SMAD1/OAZ1/PSMB4 complex mediates the degradation of the CREBBP/EP300 repressor SNIP1. This chain is Proteasome subunit beta type-4, found in Homo sapiens (Human).